Reading from the N-terminus, the 213-residue chain is Orotate phosphoribosyltransferase (213 aa).

5-phospho-alpha-D-ribose 1-diphosphate is bound at residue Lys-26. Residue 34-35 participates in orotate binding; that stretch reads FF. 5-phospho-alpha-D-ribose 1-diphosphate-binding positions include 72 to 73, Arg-99, Lys-100, Lys-103, His-105, and 124 to 132; these read YK and DDVITAGTA. Thr-128 and Arg-156 together coordinate orotate.

This sequence belongs to the purine/pyrimidine phosphoribosyltransferase family. PyrE subfamily. In terms of assembly, homodimer. Mg(2+) serves as cofactor.

The enzyme catalyses orotidine 5'-phosphate + diphosphate = orotate + 5-phospho-alpha-D-ribose 1-diphosphate. It participates in pyrimidine metabolism; UMP biosynthesis via de novo pathway; UMP from orotate: step 1/2. In terms of biological role, catalyzes the transfer of a ribosyl phosphate group from 5-phosphoribose 1-diphosphate to orotate, leading to the formation of orotidine monophosphate (OMP). The chain is Orotate phosphoribosyltransferase from Actinobacillus pleuropneumoniae serotype 5b (strain L20).